The chain runs to 250 residues: Isoprenyl transferase (250 aa).

The active site involves Asp26. Asp26 provides a ligand contact to Mg(2+). Residues 27-30 (GNGR), Trp31, Arg39, His43, and 71-73 (STE) contribute to the substrate site. Asn74 (proton acceptor) is an active-site residue. Residues Trp75, Arg77, Arg198, and 204–206 (RLS) contribute to the substrate site. Position 217 (Glu217) interacts with Mg(2+).

This sequence belongs to the UPP synthase family. Homodimer. Mg(2+) serves as cofactor.

In terms of biological role, catalyzes the condensation of isopentenyl diphosphate (IPP) with allylic pyrophosphates generating different type of terpenoids. The polypeptide is Isoprenyl transferase (Streptococcus agalactiae serotype V (strain ATCC BAA-611 / 2603 V/R)).